A 367-amino-acid chain; its full sequence is tRNA/tmRNA (uracil-C(5))-methyltransferase (367 aa).

5 residues coordinate S-adenosyl-L-methionine: Q190, Y218, N223, E239, and D299. Residue C324 is the Nucleophile of the active site. The Proton acceptor role is filled by E358.

It belongs to the class I-like SAM-binding methyltransferase superfamily. RNA M5U methyltransferase family. TrmA subfamily.

The catalysed reaction is uridine(54) in tRNA + S-adenosyl-L-methionine = 5-methyluridine(54) in tRNA + S-adenosyl-L-homocysteine + H(+). The enzyme catalyses uridine(341) in tmRNA + S-adenosyl-L-methionine = 5-methyluridine(341) in tmRNA + S-adenosyl-L-homocysteine + H(+). Dual-specificity methyltransferase that catalyzes the formation of 5-methyluridine at position 54 (m5U54) in all tRNAs, and that of position 341 (m5U341) in tmRNA (transfer-mRNA). This is tRNA/tmRNA (uracil-C(5))-methyltransferase from Serratia proteamaculans (strain 568).